The following is a 367-amino-acid chain: Pectate lyase 1 (367 aa).

The signal sequence occupies residues 1–21 (MASPCLVAVLVFLCAIVSCYS). Intrachain disulfides connect Cys-28–Cys-45 and Cys-128–Cys-147. Asn-148 carries N-linked (GlcNAc...) asparagine glycosylation. Position 170 (Asp-170) interacts with Ca(2+). Asn-178 carries an N-linked (GlcNAc...) asparagine glycan. Residues Asp-194 and Asp-198 each contribute to the Ca(2+) site. The active site involves Arg-250. Residue Asn-293 is glycosylated (N-linked (GlcNAc...) asparagine). Cys-306 and Cys-312 are disulfide-bonded.

Belongs to the polysaccharide lyase 1 family. Amb a subfamily. It depends on Ca(2+) as a cofactor.

The catalysed reaction is Eliminative cleavage of (1-&gt;4)-alpha-D-galacturonan to give oligosaccharides with 4-deoxy-alpha-D-galact-4-enuronosyl groups at their non-reducing ends.. It functions in the pathway glycan metabolism; pectin degradation; 2-dehydro-3-deoxy-D-gluconate from pectin: step 2/5. In terms of biological role, has pectate lyase activity. The chain is Pectate lyase 1 from Hesperocyparis arizonica (Arizona cypress).